Reading from the N-terminus, the 238-residue chain is Octanoyltransferase (238 aa).

Residues 40–220 enclose the BPL/LPL catalytic domain; it reads AGGSDALLLL…RVCDALDGRL (181 aa). Residues 78–85, 150–152, and 163–165 contribute to the substrate site; these read RGGKITWH, AIG, and GFA. The active-site Acyl-thioester intermediate is the Cys-181.

The protein belongs to the LipB family.

The protein resides in the cytoplasm. It catalyses the reaction octanoyl-[ACP] + L-lysyl-[protein] = N(6)-octanoyl-L-lysyl-[protein] + holo-[ACP] + H(+). The protein operates within protein modification; protein lipoylation via endogenous pathway; protein N(6)-(lipoyl)lysine from octanoyl-[acyl-carrier-protein]: step 1/2. Catalyzes the transfer of endogenously produced octanoic acid from octanoyl-acyl-carrier-protein onto the lipoyl domains of lipoate-dependent enzymes. Lipoyl-ACP can also act as a substrate although octanoyl-ACP is likely to be the physiological substrate. This chain is Octanoyltransferase, found in Mycobacterium sp. (strain JLS).